Here is a 637-residue protein sequence, read N- to C-terminus: MPERIEWLEDGTPYSPRFGDRYRSESGGLDQAREVFLKGCGLPAAWAGQPQWCVLETGFGLGLNFLVTWQAWKTDPLRPRLLHFVSTEAFPASAADVLRSVQVHPELLPLARQLHDQLWGLLPGFHRLVFEEGRVMLTLCIGDAKAMLREQSFEADSVYLDGFNPGLKPADSPDIWDLHTFKAVARCCRRGTRVATWTVARSVRDALAQCGFVVKKTPGIPPKRDNLQGEFNPAWEPKKSMLPGIRRQAGSCVVIGAGLAGAAVAASLARRGWRVVVLDAADAPARGASGLPAGVLAPHVSPDDSLLSRLSRSGVRATLQQAHALLDAGTDWNPTGVLEHCVDHARKLPAAWQSDWAEAAQDWTCLATSGQLAHCRLPASAPALWHVRAGWIKPASLVQAWLTTPGVEFHDHASVGQLIRQPDSWQVLDANGHVLACAELVVLAAGYASRALAEAAVPPTSPPLALQAIRGQVSWALHPPGAADALPAFPVNGHGSLIPALPLSGNANELAWVTGSTFERDNALNDLKPEDDSHNLDRLRTLLPDVAPGLTGQLEMGQVKAWAGVRCATPSRLPALGPLAAPNLWVCSGMGSRGLTFAALCAELLAARLHAEPLPLEQRLAEALRPQYGEAKLVSED.

The segment at 1–232 (MPERIEWLED…KRDNLQGEFN (232 aa)) is tRNA (mnm(5)s(2)U34)-methyltransferase. The tract at residues 255–637 (IGAGLAGAAV…YGEAKLVSED (383 aa)) is FAD-dependent cmnm(5)s(2)U34 oxidoreductase.

This sequence in the N-terminal section; belongs to the methyltransferase superfamily. tRNA (mnm(5)s(2)U34)-methyltransferase family. It in the C-terminal section; belongs to the DAO family. The cofactor is FAD.

The protein resides in the cytoplasm. The catalysed reaction is 5-aminomethyl-2-thiouridine(34) in tRNA + S-adenosyl-L-methionine = 5-methylaminomethyl-2-thiouridine(34) in tRNA + S-adenosyl-L-homocysteine + H(+). Its function is as follows. Catalyzes the last two steps in the biosynthesis of 5-methylaminomethyl-2-thiouridine (mnm(5)s(2)U) at the wobble position (U34) in tRNA. Catalyzes the FAD-dependent demodification of cmnm(5)s(2)U34 to nm(5)s(2)U34, followed by the transfer of a methyl group from S-adenosyl-L-methionine to nm(5)s(2)U34, to form mnm(5)s(2)U34. The chain is tRNA 5-methylaminomethyl-2-thiouridine biosynthesis bifunctional protein MnmC from Polaromonas sp. (strain JS666 / ATCC BAA-500).